Here is a 244-residue protein sequence, read N- to C-terminus: ATP synthase subunit a, chloroplastic (244 aa).

A run of 5 helical transmembrane segments spans residues Gln35–Val55, Val92–Leu112, Ile131–Ser151, Leu196–Leu216, and Gly217–Gly237.

Belongs to the ATPase A chain family. F-type ATPases have 2 components, CF(1) - the catalytic core - and CF(0) - the membrane proton channel. CF(1) has five subunits: alpha(3), beta(3), gamma(1), delta(1), epsilon(1). CF(0) has four main subunits: a, b, b' and c.

The protein localises to the plastid. The protein resides in the chloroplast thylakoid membrane. Functionally, key component of the proton channel; it plays a direct role in the translocation of protons across the membrane. This chain is ATP synthase subunit a, chloroplastic, found in Gossypium barbadense (Sea Island cotton).